The sequence spans 74 residues: Exodeoxyribonuclease 7 small subunit (74 aa).

It belongs to the XseB family. In terms of assembly, heterooligomer composed of large and small subunits.

It localises to the cytoplasm. It carries out the reaction Exonucleolytic cleavage in either 5'- to 3'- or 3'- to 5'-direction to yield nucleoside 5'-phosphates.. Functionally, bidirectionally degrades single-stranded DNA into large acid-insoluble oligonucleotides, which are then degraded further into small acid-soluble oligonucleotides. In Actinobacillus pleuropneumoniae serotype 5b (strain L20), this protein is Exodeoxyribonuclease 7 small subunit.